A 396-amino-acid chain; its full sequence is Peroxisome proliferator-activated receptor delta (396 aa).

The interval 1-24 is disordered; sequence MKEEIPPRSPILDEQPSTPLEHQE. A compositionally biased stretch (polar residues) spans 15-24; the sequence is QPSTPLEHQE. Positions 28 to 102 form a DNA-binding region, nuclear receptor; it reads SVDCKICGDR…LGMSHNAIRF (75 aa). 2 NR C4-type zinc fingers span residues 31–51 and 68–90; these read CKIC…CEGC and CDRN…FNKC. Residues 166–394 form the NR LBD domain; it reads FVIHDMDTLW…HPLLQEIYRD (229 aa).

The protein belongs to the nuclear hormone receptor family. NR1 subfamily. As to quaternary structure, heterodimer with the retinoid X receptor. Post-translationally, 'Lys-48'-linked polyubiquitinated; leading to proteasomal degradation. Deubiquitinated and stabilized by OTUD3. In terms of tissue distribution, ubiquitous.

It localises to the nucleus. Functionally, ligand-activated transcription factor key mediator of energy metabolism in adipose tissues. Receptor that binds peroxisome proliferators such as hypolipidemic drugs and fatty acids. Has a preference for poly-unsaturated fatty acids, such as gamma-linoleic acid and eicosapentanoic acid. Once activated by a ligand, the receptor binds to promoter elements of target genes. Regulates the peroxisomal beta-oxidation pathway of fatty acids. Functions as a transcription activator for the acyl-CoA oxidase gene. Decreases expression of NPC1L1 once activated by a ligand. The sequence is that of Peroxisome proliferator-activated receptor delta (ppard) from Xenopus laevis (African clawed frog).